We begin with the raw amino-acid sequence, 417 residues long: Creatine kinase U-type, mitochondrial (417 aa).

The transit peptide at 1 to 39 (MAGPFSRLLSARPGLRLLALAGAGSLAAGFLLRPEPVRA) directs the protein to the mitochondrion. Positions 40-64 (ASERRRLYPPSAEYPDLRKHNNCMA) are cardiolipin-binding. The Phosphagen kinase N-terminal domain occupies 45–131 (RLYPPSAEYP…FDPVIQERHN (87 aa)). A Phosphoserine modification is found at serine 151. In terms of domain architecture, Phosphagen kinase C-terminal spans 158–400 (YVLSSRVRTG…NYLIDCERRL (243 aa)). An ATP-binding site is contributed by 161–165 (SSRVR). Phosphoserine is present on serine 196. The residue at position 213 (threonine 213) is a Phosphothreonine. Histidine 224 contributes to the ATP binding site. Serine 232 carries the post-translational modification Phosphoserine. ATP is bound by residues arginine 269, arginine 325, 353–358 (RGTGGV), and aspartate 368. The residue at position 355 (threonine 355) is a Phosphothreonine.

The protein belongs to the ATP:guanido phosphotransferase family. In terms of assembly, exists as an octamer composed of four MTCK homodimers.

The protein localises to the mitochondrion inner membrane. The enzyme catalyses creatine + ATP = N-phosphocreatine + ADP + H(+). Its function is as follows. Reversibly catalyzes the transfer of phosphate between ATP and various phosphogens (e.g. creatine phosphate). Creatine kinase isoenzymes play a central role in energy transduction in tissues with large, fluctuating energy demands, such as skeletal muscle, heart, brain and spermatozoa. In Homo sapiens (Human), this protein is Creatine kinase U-type, mitochondrial (CKMT1A).